The following is a 324-amino-acid chain: 1-deoxyxylulose-5-phosphate synthase YajO (324 aa).

Residue Tyr-61 is the Proton donor of the active site.

This sequence belongs to the aldo/keto reductase family. Aldo/keto reductase 2 subfamily.

It catalyses the reaction D-ribulose 5-phosphate + AH2 = 1-deoxy-D-xylulose 5-phosphate + A + H2O. NADH, NADPH or ATP do not increase activity. Its function is as follows. Catalyzes the conversion of ribulose 5-phosphate (Ru5P) to 1-deoxy-D-xylulose 5-phosphate (DXP), providing a direct route from pentoses to terpenes. May play a role in biosynthesis of DXP under conditions of thiamine starvation. In Escherichia coli (strain K12), this protein is 1-deoxyxylulose-5-phosphate synthase YajO (yajO).